The chain runs to 184 residues: Ribosome-recycling factor (184 aa).

Residues 137 to 158 are disordered; it reads DSIKAKQKDGIPEDEAKRGQDE.

The protein belongs to the RRF family.

It localises to the cytoplasm. In terms of biological role, responsible for the release of ribosomes from messenger RNA at the termination of protein biosynthesis. May increase the efficiency of translation by recycling ribosomes from one round of translation to another. The protein is Ribosome-recycling factor of Desulforamulus reducens (strain ATCC BAA-1160 / DSM 100696 / MI-1) (Desulfotomaculum reducens).